The sequence spans 182 residues: Dual-action ribosomal maturation protein DarP (182 aa).

It belongs to the DarP family.

The protein resides in the cytoplasm. Member of a network of 50S ribosomal subunit biogenesis factors which assembles along the 30S-50S interface, preventing incorrect 23S rRNA structures from forming. Promotes peptidyl transferase center (PTC) maturation. The sequence is that of Dual-action ribosomal maturation protein DarP from Serratia proteamaculans (strain 568).